The following is a 105-amino-acid chain: Large ribosomal subunit protein uL24 (105 aa).

This sequence belongs to the universal ribosomal protein uL24 family. Part of the 50S ribosomal subunit.

Its function is as follows. One of two assembly initiator proteins, it binds directly to the 5'-end of the 23S rRNA, where it nucleates assembly of the 50S subunit. In terms of biological role, one of the proteins that surrounds the polypeptide exit tunnel on the outside of the subunit. This chain is Large ribosomal subunit protein uL24, found in Vibrio vulnificus (strain YJ016).